The sequence spans 363 residues: Peptide chain release factor 1 (363 aa).

Gln236 bears the N5-methylglutamine mark. A disordered region spans residues 286 to 305 (KKEMERSTMRKSQIGSGDRS).

Belongs to the prokaryotic/mitochondrial release factor family. Post-translationally, methylated by PrmC. Methylation increases the termination efficiency of RF1.

The protein localises to the cytoplasm. Functionally, peptide chain release factor 1 directs the termination of translation in response to the peptide chain termination codons UAG and UAA. The sequence is that of Peptide chain release factor 1 from Wolbachia pipientis subsp. Culex pipiens (strain wPip).